Here is a 635-residue protein sequence, read N- to C-terminus: Extracellular metalloproteinase 1 (635 aa).

An N-terminal signal peptide occupies residues 1–19 (MHGLLLAAGLLSLPLHVLA). Positions 20-246 (HPQPSTSTSL…VHNVVDYVAH (227 aa)) are excised as a propeptide. Residue asparagine 287 is glycosylated (N-linked (GlcNAc...) asparagine). Histidine 430 is a Zn(2+) binding site. The active site involves glutamate 431. Histidine 434 provides a ligand contact to Zn(2+). N-linked (GlcNAc...) asparagine glycosylation is found at asparagine 475, asparagine 594, and asparagine 623.

It belongs to the peptidase M36 family. Requires Zn(2+) as cofactor.

The protein localises to the secreted. Secreted metalloproteinase probably acting as a virulence factor. The sequence is that of Extracellular metalloproteinase 1 (MEP1) from Arthroderma benhamiae (Trichophyton mentagrophytes).